Reading from the N-terminus, the 124-residue chain is Photoactive yellow protein (124 aa).

The region spanning 22-85 (AEYLPFGAVL…GEFLRFHQTG (64 aa)) is the PAS domain. C68 is modified (S-(4-hydroxycinnamyl)cysteine).

This sequence belongs to the photoactive yellow protein family. The 4-hydroxycinnamic acid (p-coumaric acid) chromophore is covalently bound via a thioester linkage.

In terms of biological role, this photoactive protein is a photoreceptor with kinetics similar to that of rhodopsin. This is Photoactive yellow protein (pyp) from Cereibacter sphaeroides (strain ATCC 17023 / DSM 158 / JCM 6121 / CCUG 31486 / LMG 2827 / NBRC 12203 / NCIMB 8253 / ATH 2.4.1.) (Rhodobacter sphaeroides).